The sequence spans 253 residues: Alpha-acetolactate decarboxylase (253 aa).

This sequence belongs to the alpha-acetolactate decarboxylase family.

The enzyme catalyses (2S)-2-acetolactate + H(+) = (R)-acetoin + CO2. The protein operates within polyol metabolism; (R,R)-butane-2,3-diol biosynthesis; (R,R)-butane-2,3-diol from pyruvate: step 2/3. In terms of biological role, converts acetolactate into acetoin. This is Alpha-acetolactate decarboxylase (alsD) from Bacillus licheniformis (strain ATCC 14580 / DSM 13 / JCM 2505 / CCUG 7422 / NBRC 12200 / NCIMB 9375 / NCTC 10341 / NRRL NRS-1264 / Gibson 46).